The following is a 1323-amino-acid chain: Glutamate receptor ionotropic, NMDA 2D (1323 aa).

A signal peptide spans 1 to 27 (MRGAGGPRGPRGPAKMLLLLALACASP). The Extracellular portion of the chain corresponds to 28–579 (FPEEVPGPGA…SPSAFLEPYS (552 aa)). N89 is a glycosylation site (N-linked (GlcNAc...) asparagine). A disulfide bridge connects residues C101 and C345. 4 N-linked (GlcNAc...) asparagine glycosylation sites follow: N349, N363, N381, and N464. 2 disulfide bridges follow: C452/C480 and C459/C481. Positions 536, 538, and 543 each coordinate L-glutamate. N-linked (GlcNAc...) asparagine glycosylation is present at N566. A helical transmembrane segment spans residues 580-601 (PAVWVMMFVMCLTVVAVTVFIF). The Cytoplasmic portion of the chain corresponds to 602–626 (EYLSPVGYNRSLATGKRPGGSTFTI). Residues 627–638 (GKSIWLLWALVF) constitute an intramembrane region (discontinuously helical). Residues 628–647 (KSIWLLWALVFNNSVPVENP) are pore-forming. At 639 to 650 (NNSVPVENPRGT) the chain is on the cytoplasmic side. A helical transmembrane segment spans residues 651–671 (TSKIMVLVWAFFAVIFLASYT). Residues 672 to 840 (ANLAAFMIQE…EVMSSKLDID (169 aa)) lie on the Extracellular side of the membrane. N712 carries an N-linked (GlcNAc...) asparagine glycan. L-glutamate-binding residues include S714, T715, and D756. Residues C770 and C825 are joined by a disulfide bond. Residues 841 to 864 (NMAGVFYMLLVAMGLSLLVFAWEH) form a helical membrane-spanning segment. Topologically, residues 865–1323 (LVYWRLRHCL…AHFSSLESEV (459 aa)) are cytoplasmic. Disordered stretches follow at residues 897 to 952 (EAAP…PGGA), 977 to 1112 (AAPR…SLGG), and 1201 to 1323 (PWAA…ESEV). Over residues 899–929 (APPPAKPPPPPQPLPSPAYPAARPPPGPAPF) the composition is skewed to pro residues. Residues 931-940 (PRERAAADRW) are compositionally biased toward basic and acidic residues. The span at 977-986 (AAPRGAAGRP) shows a compositional bias: low complexity. Positions 987-1001 (LSPPTTQPPQKPPPS) are enriched in pro residues. Low complexity predominate over residues 1030–1039 (AAAAAAVGPP). Pro residues predominate over residues 1080-1092 (TAPPPRRAAPPPC). Residues 1208 to 1228 (PRRRARCGCPRPHPHRPRASH) show a composition bias toward basic residues. At R1303 the chain carries Omega-N-methylarginine. Phosphoserine is present on S1313. The short motif at 1321 to 1323 (SEV) is the PDZ-binding element.

It belongs to the glutamate-gated ion channel (TC 1.A.10.1) family. NR2D/GRIN2D subfamily. In terms of assembly, heterotetramer. Forms heterotetrameric channels composed of two GluN1/zeta subunits (GRIN1), and two identical GluN2/epsilon subunits (GRIN2A, GRIN2B, GRIN2C or GRIN2D) or GluN3 subunits (GRIN3A or GRIN3B) (in vitro). In vivo, the subunit composition may depend on the expression levels of the different subunits. Interacts with PDZ domains of PATJ and DLG4. Expressed in brain, mainly in the subcortical region.

The protein localises to the cell membrane. Its subcellular location is the postsynaptic cell membrane. The enzyme catalyses Ca(2+)(in) = Ca(2+)(out). It carries out the reaction Na(+)(in) = Na(+)(out). The catalysed reaction is K(+)(in) = K(+)(out). In terms of biological role, component of N-methyl-D-aspartate (NMDA) receptors (NMDARs) that function as heterotetrameric, ligand-gated cation channels with high calcium permeability and voltage-dependent block by Mg(2+). Participates in synaptic plasticity for learning and memory formation. Channel activation requires binding of the neurotransmitter L-glutamate to the GluN2 subunit, glycine or D-serine binding to the GluN1 subunit, plus membrane depolarization to eliminate channel inhibition by Mg(2+). NMDARs mediate simultaneously the potasium efflux and the influx of calcium and sodium. Each GluN2 subunit confers differential attributes to channel properties, including activation, deactivation and desensitization kinetics, pH sensitivity, Ca2(+) permeability, and binding to allosteric modulators. This chain is Glutamate receptor ionotropic, NMDA 2D, found in Rattus norvegicus (Rat).